The chain runs to 591 residues: V-type ATP synthase alpha chain (591 aa).

232-239 (GPFGAGKT) provides a ligand contact to ATP.

It belongs to the ATPase alpha/beta chains family.

The catalysed reaction is ATP + H2O + 4 H(+)(in) = ADP + phosphate + 5 H(+)(out). In terms of biological role, produces ATP from ADP in the presence of a proton gradient across the membrane. The V-type alpha chain is a catalytic subunit. In Clostridium perfringens (strain ATCC 13124 / DSM 756 / JCM 1290 / NCIMB 6125 / NCTC 8237 / Type A), this protein is V-type ATP synthase alpha chain.